A 199-amino-acid chain; its full sequence is Photosystem II D1 precursor processing protein PSB27-H2, chloroplastic (199 aa).

Belongs to the Psb27 family. Interacts with the C-terminus of both the precursor and mature form of D1.

Its subcellular location is the plastid. The protein resides in the chloroplast thylakoid lumen. Its function is as follows. Required, but not essential, for D1 (psbA) precursor processing and thus correct photosystem II assembly (PSII). The protein is Photosystem II D1 precursor processing protein PSB27-H2, chloroplastic (PSB27-2) of Arabidopsis thaliana (Mouse-ear cress).